A 485-amino-acid polypeptide reads, in one-letter code: MATNPLSILFVASEVEGLIKSGGLADVAKALPEALVNLQHDARIAIPAYTAIPNVCDDEVILDTHLETWPHTHYQVKKRFLGDNPVYLIACGHYFDRPSMYAENNQAYTDNGERFAFFSAACLDMLPKIGFQPDIVHANDWHTGLVPFLLKHRYGQDPFFAQTKSILSIHNAVFKGVFHYDEMQCLPEFHCRNVPDAAVSSTHMTMLKAGVMNADKINAVSPTYAEELKTELGSHGMAWEFQQRAGDLVGILNGCDYSAWHPDTDSYLPINYKATKQSMVRGKNGCKRALQEQVGLPVKDVAMFGMVCRLTHQKGVHYLLPVLTEFLKLDVQLVLVGTGDPLLAAQLRDVAAQFGEKFVFVEAYNNQLAHLVEAASDFFLMPSEFEPCGLNQIYSMAYGSLPIVRGVGGLKDSVCDYDVNPETATGFVFYEPTAQALLITMQRALLLYAQNLTELRRVQLYAMERDFCWNKAAEQYVELYRSALK.

ADP-alpha-D-glucose is bound at residue Lys20.

Belongs to the glycosyltransferase 1 family. Bacterial/plant glycogen synthase subfamily.

The enzyme catalyses [(1-&gt;4)-alpha-D-glucosyl](n) + ADP-alpha-D-glucose = [(1-&gt;4)-alpha-D-glucosyl](n+1) + ADP + H(+). Its pathway is glycan biosynthesis; glycogen biosynthesis. Its function is as follows. Synthesizes alpha-1,4-glucan chains using ADP-glucose. This chain is Glycogen synthase, found in Vibrio vulnificus (strain YJ016).